Reading from the N-terminus, the 130-residue chain is MAKLSTDELLDAFKEMTLLELSEFVKQFEDTFGVTAAAPVAIAAGPVAGGAGGEAAAVEEQDEFDVILESVGDKKIQVIKEVRALTSLGLKEAKDLVDGAPKPVLEKVAKEAADKAKAALEGAGATVTVK.

It belongs to the bacterial ribosomal protein bL12 family. As to quaternary structure, homodimer. Part of the ribosomal stalk of the 50S ribosomal subunit. Forms a multimeric L10(L12)X complex, where L10 forms an elongated spine to which 2 to 4 L12 dimers bind in a sequential fashion. Binds GTP-bound translation factors.

Functionally, forms part of the ribosomal stalk which helps the ribosome interact with GTP-bound translation factors. Is thus essential for accurate translation. The chain is Large ribosomal subunit protein bL12 from Parafrankia sp. (strain EAN1pec).